Reading from the N-terminus, the 146-residue chain is Kappa-casein (146 aa).

Residues Thr107 and Thr112 are each glycosylated (O-linked (GalNAc...) threonine). Position 125 is a phosphoserine; alternate (Ser125). Residue Ser125 is glycosylated (O-linked (GalNAc...) serine; alternate). Thr142 is a glycosylation site (O-linked (GalNAc...) threonine). Residue Ser143 is modified to Phosphoserine.

It belongs to the kappa-casein family. Mammary gland specific. Secreted in milk.

It is found in the secreted. In terms of biological role, kappa-casein stabilizes micelle formation, preventing casein precipitation in milk. This chain is Kappa-casein (CSN3), found in Tapirus indicus (Asiatic tapir).